A 196-amino-acid polypeptide reads, in one-letter code: Chromophore lyase CpcT/CpeT (196 aa).

The protein belongs to the CpcT/CpeT biliprotein lyase family.

Its function is as follows. Covalently attaches a chromophore to Cys residue(s) of phycobiliproteins. The polypeptide is Chromophore lyase CpcT/CpeT (Thermosynechococcus vestitus (strain NIES-2133 / IAM M-273 / BP-1)).